The primary structure comprises 170 residues: Large ribosomal subunit protein uL5 (170 aa).

Belongs to the universal ribosomal protein uL5 family. Part of the 50S ribosomal subunit; contacts the 5S rRNA and probably tRNA. Forms a bridge to the 30S subunit in the 70S ribosome.

This is one of the proteins that bind and probably mediate the attachment of the 5S RNA into the large ribosomal subunit, where it forms part of the central protuberance. In the 70S ribosome it contacts protein S13 of the 30S subunit (bridge B1b), connecting the 2 subunits; this bridge is implicated in subunit movement. May contact the P site tRNA; the 5S rRNA and some of its associated proteins might help stabilize positioning of ribosome-bound tRNAs. This Methanobrevibacter smithii (strain ATCC 35061 / DSM 861 / OCM 144 / PS) protein is Large ribosomal subunit protein uL5.